The sequence spans 270 residues: Urease accessory protein UreD (270 aa).

It belongs to the UreD family. As to quaternary structure, ureD, UreF and UreG form a complex that acts as a GTP-hydrolysis-dependent molecular chaperone, activating the urease apoprotein by helping to assemble the nickel containing metallocenter of UreC. The UreE protein probably delivers the nickel.

It is found in the cytoplasm. Its function is as follows. Required for maturation of urease via the functional incorporation of the urease nickel metallocenter. The chain is Urease accessory protein UreD from Microcystis aeruginosa (strain NIES-843 / IAM M-2473).